The chain runs to 141 residues: Putative pre-16S rRNA nuclease (141 aa).

The protein belongs to the YqgF nuclease family.

It is found in the cytoplasm. Functionally, could be a nuclease involved in processing of the 5'-end of pre-16S rRNA. In Syntrophomonas wolfei subsp. wolfei (strain DSM 2245B / Goettingen), this protein is Putative pre-16S rRNA nuclease.